Here is a 444-residue protein sequence, read N- to C-terminus: tRNA-2-methylthio-N(6)-dimethylallyladenosine synthase (444 aa).

One can recognise an MTTase N-terminal domain in the interval 2 to 119; sequence KKVYIKTFGC…LPDLIESRKQ (118 aa). Positions 11, 48, 82, 156, 160, and 163 each coordinate [4Fe-4S] cluster. Residues 142–374 form the Radical SAM core domain; that stretch reads KVDGGAAFVS…NEVIEAKGYA (233 aa). A TRAM domain is found at 377–440; it reads QSMVGTVQRV…PHSLAGEALT (64 aa).

Belongs to the methylthiotransferase family. MiaB subfamily. Monomer. It depends on [4Fe-4S] cluster as a cofactor.

It localises to the cytoplasm. The enzyme catalyses N(6)-dimethylallyladenosine(37) in tRNA + (sulfur carrier)-SH + AH2 + 2 S-adenosyl-L-methionine = 2-methylsulfanyl-N(6)-dimethylallyladenosine(37) in tRNA + (sulfur carrier)-H + 5'-deoxyadenosine + L-methionine + A + S-adenosyl-L-homocysteine + 2 H(+). In terms of biological role, catalyzes the methylthiolation of N6-(dimethylallyl)adenosine (i(6)A), leading to the formation of 2-methylthio-N6-(dimethylallyl)adenosine (ms(2)i(6)A) at position 37 in tRNAs that read codons beginning with uridine. This is tRNA-2-methylthio-N(6)-dimethylallyladenosine synthase from Chromobacterium violaceum (strain ATCC 12472 / DSM 30191 / JCM 1249 / CCUG 213 / NBRC 12614 / NCIMB 9131 / NCTC 9757 / MK).